Consider the following 612-residue polypeptide: Rhamnogalacturonan exolyase YesX (612 aa).

A substrate-binding site is contributed by asparagine 119. Aspartate 120, aspartate 125, aspartate 127, aspartate 129, glutamate 131, and glutamate 133 together coordinate Ca(2+). 3 residues coordinate substrate: aspartate 139, glutamate 154, and arginine 174. Ca(2+) contacts are provided by aspartate 189, aspartate 191, aspartate 193, lysine 195, and glutamate 197. 2 residues coordinate substrate: glycine 205 and arginine 222. Histidine 330, aspartate 336, aspartate 338, aspartate 340, lysine 342, glutamate 344, aspartate 353, histidine 354, histidine 366, aspartate 368, aspartate 374, aspartate 376, arginine 379, glycine 381, glutamate 383, and glutamate 389 together coordinate Ca(2+). Position 419 (arginine 419) interacts with substrate. Residues aspartate 472, aspartate 474, valine 476, and glutamate 478 each contribute to the Ca(2+) site. 516–518 contacts substrate; sequence NGT. Ca(2+) contacts are provided by asparagine 527, phenylalanine 529, aspartate 531, arginine 533, glutamate 535, asparagine 576, and alanine 578. Tyrosine 579 is a binding site for substrate. Residue asparagine 580 participates in Ca(2+) binding.

The protein belongs to the polysaccharide lyase 11 family. Monomer. Mn(2+) serves as cofactor. The cofactor is Zn(2+). It depends on Co(2+) as a cofactor. Requires Ca(2+) as cofactor.

It localises to the secreted. It carries out the reaction Exotype eliminative cleavage of alpha-L-rhamnopyranosyl-(1-&gt;4)-alpha-D-galactopyranosyluronic acid bonds of rhamnogalacturonan I oligosaccharides containing alpha-L-rhamnopyranose at the reducing end and 4-deoxy-4,5-unsaturated D-galactopyranosyluronic acid at the non-reducing end. The products are the disaccharide 2-O-(4-deoxy-beta-L-threo-hex-4-enopyranuronosyl)-alpha-L-rhamnopyranose and the shortened rhamnogalacturonan oligosaccharide containing one 4-deoxy-4,5-unsaturated D-galactopyranosyluronic acid at the non-reducing end.. In terms of biological role, pectinolytic enzyme that degrades type I rhamnogalacturonan from plant cell walls and releases disaccharide products. Degrades rhamnogalacturonan, polygalacturonic acid and pectic acid. Has very low activity on pectin. This Bacillus subtilis (strain 168) protein is Rhamnogalacturonan exolyase YesX (yesX).